The sequence spans 256 residues: CRAL-TRIO domain-containing protein DDB_G0278031 (256 aa).

Residues 82–245 form the CRAL-TRIO domain; sequence NPELAMKSSS…EYGGTLNLTY (164 aa).

The sequence is that of CRAL-TRIO domain-containing protein DDB_G0278031 from Dictyostelium discoideum (Social amoeba).